The following is a 396-amino-acid chain: Putative N(4)-(beta-N-acetylglucosaminyl)-L-asparaginase GE19290 (396 aa).

The N-terminal stretch at 1–23 is a signal peptide; sequence MKRHLKACLWVLCFASTALSSLA. Cystine bridges form between C100–C105 and C199–C215. T246 serves as the catalytic Nucleophile. Substrate contacts are provided by residues 274 to 277 and 297 to 300; these read RVGD and TGDG. The cysteines at positions 357 and 384 are disulfide-linked.

Belongs to the Ntn-hydrolase family. In terms of assembly, heterotetramer of two alpha and two beta chains arranged as a dimer of alpha/beta heterodimers. In terms of processing, cleaved into an alpha and beta chain by autocatalysis; this activates the enzyme. The N-terminal residue of the beta subunit is responsible for the nucleophile hydrolase activity.

The enzyme catalyses N(4)-(beta-N-acetyl-D-glucosaminyl)-L-asparagine + H2O = N-acetyl-beta-D-glucosaminylamine + L-aspartate + H(+). In terms of biological role, cleaves the GlcNAc-Asn bond which joins oligosaccharides to the peptide of asparagine-linked glycoproteins. This chain is Putative N(4)-(beta-N-acetylglucosaminyl)-L-asparaginase GE19290, found in Drosophila yakuba (Fruit fly).